A 221-amino-acid chain; its full sequence is Glutathione peroxidase 6 (221 aa).

Positions 1 to 19 (MAQKLWGSCLFSLFMAALA) are cleaved as a signal peptide. The active site involves Cys-73.

This sequence belongs to the glutathione peroxidase family.

Its subcellular location is the secreted. It catalyses the reaction 2 glutathione + H2O2 = glutathione disulfide + 2 H2O. The protein is Glutathione peroxidase 6 (Gpx6) of Mus musculus (Mouse).